The sequence spans 157 residues: 6,7-dimethyl-8-ribityllumazine synthase (157 aa).

5-amino-6-(D-ribitylamino)uracil contacts are provided by residues Phe22, 57-59 (AYE), and 81-83 (TVI). 86–87 (GT) contributes to the (2S)-2-hydroxy-3-oxobutyl phosphate binding site. His89 (proton donor) is an active-site residue. Position 114 (Phe114) interacts with 5-amino-6-(D-ribitylamino)uracil. Arg128 contacts (2S)-2-hydroxy-3-oxobutyl phosphate.

It belongs to the DMRL synthase family. Forms an icosahedral capsid composed of 60 subunits, arranged as a dodecamer of pentamers.

The catalysed reaction is (2S)-2-hydroxy-3-oxobutyl phosphate + 5-amino-6-(D-ribitylamino)uracil = 6,7-dimethyl-8-(1-D-ribityl)lumazine + phosphate + 2 H2O + H(+). It participates in cofactor biosynthesis; riboflavin biosynthesis; riboflavin from 2-hydroxy-3-oxobutyl phosphate and 5-amino-6-(D-ribitylamino)uracil: step 1/2. Catalyzes the formation of 6,7-dimethyl-8-ribityllumazine by condensation of 5-amino-6-(D-ribitylamino)uracil with 3,4-dihydroxy-2-butanone 4-phosphate. This is the penultimate step in the biosynthesis of riboflavin. This Histophilus somni (strain 129Pt) (Haemophilus somnus) protein is 6,7-dimethyl-8-ribityllumazine synthase.